Reading from the N-terminus, the 95-residue chain is MWKARTALGDLDTVFYDAGTANGTNGISVSPVNGFLNWWDSIELWLSGLAFVLQAALVMPVVLAFAYGTALVLDFALGKGIQLMRRAYHPDSARG.

Residues 45–65 traverse the membrane as a helical segment; the sequence is WLSGLAFVLQAALVMPVVLAF.

It is found in the membrane. This is an uncharacterized protein from Mycobacterium leprae (strain TN).